Consider the following 476-residue polypeptide: Cytochrome c oxidase subunit 1 (476 aa).

A helical transmembrane segment spans residues 19–39; it reads LYYLWFSFLFGIYGFLLSVIL. Residue E42 participates in Ca(2+) binding. 8 consecutive transmembrane segments (helical) span residues 61-81, 105-125, 144-164, 194-214, 240-260, 278-298, 309-329, and 345-365; these read MIFT…GLFG, ISLL…AAEF, LSPV…IASI, LIIT…GVLM, LLWF…FGII, MILA…HHMY, FFTS…FNWL, and LLSL…VILG. H66 is a binding site for Fe(II)-heme a. H246 lines the Cu cation pocket. A cross-link (1'-histidyl-3'-tyrosine (His-Tyr)) is located at residues 246-250; sequence HPEVY. An O2-binding site is contributed by Y250. H295 and H296 together coordinate Cu cation. Residues H374 and D375 each coordinate Mg(2+). Helical transmembrane passes span 379–399 and 415–435; these read VIAH…FTSV and TIIV…FLPM. Residue H382 participates in heme a3 binding. H384 is a Fe(II)-heme a binding site. A Ca(2+)-binding site is contributed by P448. The helical transmembrane segment at 455–475 threads the bilayer; the sequence is NGWNMICSIGSTMTLFGLLIF.

It belongs to the heme-copper respiratory oxidase family. In terms of assembly, component of the cytochrome c oxidase (complex IV, CIV), a multisubunit enzyme composed of a catalytic core of 3 subunits and several supernumerary subunits. The complex exists as a monomer or a dimer and forms supercomplexes (SCs) in the inner mitochondrial membrane with ubiquinol-cytochrome c oxidoreductase (cytochrome b-c1 complex, complex III, CIII). It depends on heme as a cofactor. Cu cation serves as cofactor.

The protein resides in the mitochondrion inner membrane. It catalyses the reaction 4 Fe(II)-[cytochrome c] + O2 + 8 H(+)(in) = 4 Fe(III)-[cytochrome c] + 2 H2O + 4 H(+)(out). It participates in energy metabolism; oxidative phosphorylation. In terms of biological role, component of the cytochrome c oxidase, the last enzyme in the mitochondrial electron transport chain which drives oxidative phosphorylation. The respiratory chain contains 3 multisubunit complexes succinate dehydrogenase (complex II, CII), ubiquinol-cytochrome c oxidoreductase (cytochrome b-c1 complex, complex III, CIII) and cytochrome c oxidase (complex IV, CIV), that cooperate to transfer electrons derived from NADH and succinate to molecular oxygen, creating an electrochemical gradient over the inner membrane that drives transmembrane transport and the ATP synthase. Cytochrome c oxidase is the component of the respiratory chain that catalyzes the reduction of oxygen to water. Electrons originating from reduced cytochrome c in the intermembrane space (IMS) are transferred via the dinuclear copper A center (CU(A)) of subunit 2 and heme A of subunit 1 to the active site in subunit 1, a binuclear center (BNC) formed by heme A3 and copper B (CU(B)). The BNC reduces molecular oxygen to 2 water molecules using 4 electrons from cytochrome c in the IMS and 4 protons from the mitochondrial matrix. The sequence is that of Cytochrome c oxidase subunit 1 (COI) from Plasmodium chabaudi.